The following is a 227-amino-acid chain: Phosphoribosylformylglycinamidine synthase subunit PurQ (227 aa).

The Glutamine amidotransferase type-1 domain occupies 3 to 225 (FAVIVFPGSN…LKYWRETYVV (223 aa)). Cys86 (nucleophile) is an active-site residue. Catalysis depends on residues His194 and Glu196.

In terms of assembly, part of the FGAM synthase complex composed of 1 PurL, 1 PurQ and 2 PurS subunits.

The protein resides in the cytoplasm. The catalysed reaction is N(2)-formyl-N(1)-(5-phospho-beta-D-ribosyl)glycinamide + L-glutamine + ATP + H2O = 2-formamido-N(1)-(5-O-phospho-beta-D-ribosyl)acetamidine + L-glutamate + ADP + phosphate + H(+). It carries out the reaction L-glutamine + H2O = L-glutamate + NH4(+). The protein operates within purine metabolism; IMP biosynthesis via de novo pathway; 5-amino-1-(5-phospho-D-ribosyl)imidazole from N(2)-formyl-N(1)-(5-phospho-D-ribosyl)glycinamide: step 1/2. Functionally, part of the phosphoribosylformylglycinamidine synthase complex involved in the purines biosynthetic pathway. Catalyzes the ATP-dependent conversion of formylglycinamide ribonucleotide (FGAR) and glutamine to yield formylglycinamidine ribonucleotide (FGAM) and glutamate. The FGAM synthase complex is composed of three subunits. PurQ produces an ammonia molecule by converting glutamine to glutamate. PurL transfers the ammonia molecule to FGAR to form FGAM in an ATP-dependent manner. PurS interacts with PurQ and PurL and is thought to assist in the transfer of the ammonia molecule from PurQ to PurL. The polypeptide is Phosphoribosylformylglycinamidine synthase subunit PurQ (Bacillus cytotoxicus (strain DSM 22905 / CIP 110041 / 391-98 / NVH 391-98)).